Here is a 202-residue protein sequence, read N- to C-terminus: Peptide methionine sulfoxide reductase A3 (202 aa).

The interval 1–34 (MNILNRLGLGSSGQTNMDPSPIAQGNDDDTPAPG) is disordered. Serine 189 is modified (phosphoserine).

It belongs to the MsrA Met sulfoxide reductase family. Expressed in rosette and cauline leaves, and at lower levels in roots, stems and flowers (at protein level).

Its subcellular location is the cytoplasm. The protein resides in the cytosol. The enzyme catalyses L-methionyl-[protein] + [thioredoxin]-disulfide + H2O = L-methionyl-(S)-S-oxide-[protein] + [thioredoxin]-dithiol. The catalysed reaction is [thioredoxin]-disulfide + L-methionine + H2O = L-methionine (S)-S-oxide + [thioredoxin]-dithiol. Functionally, catalyzes the reduction of methionine sulfoxide (MetSO) to methionine in proteins. Plays a protective role against oxidative stress by restoring activity to proteins that have been inactivated by methionine oxidation. May prevent cellular oxidative damage due to light exposure. MSRA family specifically reduces the MetSO S-enantiomer. This is Peptide methionine sulfoxide reductase A3 (MSRA3) from Arabidopsis thaliana (Mouse-ear cress).